The primary structure comprises 217 residues: Uridine kinase (217 aa).

An ATP-binding site is contributed by 17–24 (GASASGKS).

This sequence belongs to the uridine kinase family.

Its subcellular location is the cytoplasm. It catalyses the reaction uridine + ATP = UMP + ADP + H(+). The enzyme catalyses cytidine + ATP = CMP + ADP + H(+). It functions in the pathway pyrimidine metabolism; CTP biosynthesis via salvage pathway; CTP from cytidine: step 1/3. It participates in pyrimidine metabolism; UMP biosynthesis via salvage pathway; UMP from uridine: step 1/1. The polypeptide is Uridine kinase (Haemophilus ducreyi (strain 35000HP / ATCC 700724)).